A 654-amino-acid polypeptide reads, in one-letter code: ATP-dependent rRNA helicase spb-4 (654 aa).

A Q motif motif is present at residues 17-45; sequence WDALTPPLAQWILDYLSSMGFTQPTPVQK. In terms of domain architecture, Helicase ATP-binding spans 48 to 249; the sequence is LELFRGNKDV…TVGLLYPHKI (202 aa). Residue 61–68 participates in ATP binding; the sequence is AVTGSGKT. The DEAD box signature appears at 197–200; sequence DEAD. Residues 286–444 form the Helicase C-terminal domain; the sequence is AIVQLLEKLE…VTPDEVERVS (159 aa). Positions 531-631 form a coiled coil; sequence REKKRQEELA…EERAAALAAN (101 aa). Basic and acidic residues predominate over residues 542–577; sequence WKEEKAKRAQEENTGDKRKKNEAWSGKAEQEETKLQ. Positions 542-654 are disordered; that stretch reads WKEEKAKRAQ…SDEEFGGFDD (113 aa). Basic residues predominate over residues 578-588; sequence RREKKRRKREA. Over residues 589–625 the composition is skewed to basic and acidic residues; sequence KKFSEMTEKEKEEHLKLEQMIEEVRKRNEAKAAEERA. Residues 644–654 are compositionally biased toward acidic residues; sequence DSDEEFGGFDD.

Belongs to the DEAD box helicase family. DDX55/SPB4 subfamily. In terms of assembly, component of pre-60S ribosomal complexes.

The protein localises to the nucleus. The protein resides in the nucleolus. It catalyses the reaction ATP + H2O = ADP + phosphate + H(+). Functionally, ATP-binding RNA helicase involved in the biogenesis of 60S ribosomal subunits. Binds 90S pre-ribosomal particles and dissociates from pre-60S ribosomal particles after processing of 27SB pre-rRNA. Required for the normal formation of 18S rRNA through the processing of pre-rRNAs at sites A0, A1 and A2, and the normal formation of 25S and 5.8S rRNAs through the processing of pre-rRNAs at sites C1 and C2. The chain is ATP-dependent rRNA helicase spb-4 from Neurospora crassa (strain ATCC 24698 / 74-OR23-1A / CBS 708.71 / DSM 1257 / FGSC 987).